Here is a 172-residue protein sequence, read N- to C-terminus: Adrenodoxin homolog, mitochondrial (172 aa).

A mitochondrion-targeting transit peptide spans 1–16 (MLKIVTRAGHTARISN). The region spanning 61–163 (LKITFILKDG…GIRVALPQMT (103 aa)) is the 2Fe-2S ferredoxin-type domain. [2Fe-2S] cluster is bound by residues Cys-98, Cys-104, Cys-107, and Cys-144.

The protein belongs to the adrenodoxin/putidaredoxin family. As to quaternary structure, interacts in its reduced state with the apo form of ISU1. [2Fe-2S] cluster is required as a cofactor.

The protein resides in the mitochondrion matrix. Functionally, iron-sulfur protein that transfers electrons in a wide variety of metabolic reactions. Involved in heme A biosynthesis and in iron-sulfur cluster assembly. Transfers electrons from adrenodoxin reductase ARH1 to heme A synthase COX15, a heme protein that catalyzes the conversion of heme O to heme A. Required for the de novo synthesis of Fe-S clusters on iron sulfur cluster assembly protein ISU1. Interact in its reduced state with ISU1 to productively deliver electrons for Fe-S cluster synthesis. Essential for coenzyme Q biosynthesis. May transfer the electrons required for the hydroxylation reaction performed by COQ6. This Saccharomyces cerevisiae (strain ATCC 204508 / S288c) (Baker's yeast) protein is Adrenodoxin homolog, mitochondrial.